The chain runs to 535 residues: CTP synthase (535 aa).

Positions 1-267 (MTKFIFVTGG…DDIVIKKLGL (267 aa)) are amidoligase domain. Position 13 (Ser13) interacts with CTP. A UTP-binding site is contributed by Ser13. Residue 14-19 (SLGKGI) participates in ATP binding. An L-glutamine-binding site is contributed by Tyr54. An ATP-binding site is contributed by Asp71. Mg(2+)-binding residues include Asp71 and Glu141. CTP is bound by residues 148 to 150 (DIE), 188 to 193 (KTKPTQ), and Lys224. UTP is bound by residues 188–193 (KTKPTQ) and Lys224. Residues 292 to 534 (TIGIVGKYVS…IGASLKTNKL (243 aa)) form the Glutamine amidotransferase type-1 domain. Gly354 lines the L-glutamine pocket. Cys381 functions as the Nucleophile; for glutamine hydrolysis in the catalytic mechanism. L-glutamine is bound by residues 382–385 (LGMQ), Glu405, and Arg462. Active-site residues include His507 and Glu509.

This sequence belongs to the CTP synthase family. In terms of assembly, homotetramer.

The catalysed reaction is UTP + L-glutamine + ATP + H2O = CTP + L-glutamate + ADP + phosphate + 2 H(+). It catalyses the reaction L-glutamine + H2O = L-glutamate + NH4(+). The enzyme catalyses UTP + NH4(+) + ATP = CTP + ADP + phosphate + 2 H(+). The protein operates within pyrimidine metabolism; CTP biosynthesis via de novo pathway; CTP from UDP: step 2/2. Its activity is regulated as follows. Allosterically activated by GTP, when glutamine is the substrate; GTP has no effect on the reaction when ammonia is the substrate. The allosteric effector GTP functions by stabilizing the protein conformation that binds the tetrahedral intermediate(s) formed during glutamine hydrolysis. Inhibited by the product CTP, via allosteric rather than competitive inhibition. Functionally, catalyzes the ATP-dependent amination of UTP to CTP with either L-glutamine or ammonia as the source of nitrogen. Regulates intracellular CTP levels through interactions with the four ribonucleotide triphosphates. This Carboxydothermus hydrogenoformans (strain ATCC BAA-161 / DSM 6008 / Z-2901) protein is CTP synthase.